The sequence spans 398 residues: Polyferredoxin protein VhuB (398 aa).

4Fe-4S ferredoxin-type domains are found at residues 2–31, 25–53, 54–83, 82–111, 123–152, 152–181, 191–219, 220–249, 259–291, 300–331, and 339–368; these read AGIK…IAPF, AIEI…VENN, GKLI…VDDR, DRFP…IPGK, QEPI…IEDE, ELAV…VAGK, KSFT…YNRE, DLIV…LEVE, EGLV…MINQ, TKTD…MGKI, and NRIE…LTGD. [4Fe-4S] cluster contacts are provided by Cys11, Cys14, Cys17, Cys21, Cys34, Cys37, Cys40, Cys44, Cys63, Cys66, Cys69, Cys73, Cys91, Cys94, Cys97, Cys101, Cys132, Cys135, Cys138, Cys142, Cys161, Cys164, Cys167, Cys171, Cys199, Cys202, Cys205, Cys209, Cys229, Cys232, Cys235, Cys239, Cys268, Cys271, Cys274, Cys278, Cys311, Cys314, Cys317, Cys321, Cys348, Cys351, Cys354, Cys358, Cys377, Cys380, Cys383, and Cys387.

Requires [4Fe-4S] cluster as cofactor.

The sequence is that of Polyferredoxin protein VhuB (vhuB) from Methanococcus voltae.